Reading from the N-terminus, the 710-residue chain is Polyribonucleotide nucleotidyltransferase (710 aa).

2 residues coordinate Mg(2+): Asp-489 and Asp-495. The KH domain occupies 556–615; sequence PKIDTIKIDVDKIKVVIGKGGETIDKIIAETGVKIDIDDEGNVSIYSSDQAAIDRTKEII. The 69-residue stretch at 625–693 folds into the S1 motif domain; it reads GEVYHAKVVR…EKGRVDASMK (69 aa). Residues 691-710 are disordered; it reads SMKALIPRPPKPEKKEEKHD. Residues 700-710 show a composition bias toward basic and acidic residues; the sequence is PKPEKKEEKHD.

This sequence belongs to the polyribonucleotide nucleotidyltransferase family. Mg(2+) serves as cofactor.

The protein localises to the cytoplasm. It catalyses the reaction RNA(n+1) + phosphate = RNA(n) + a ribonucleoside 5'-diphosphate. Involved in mRNA degradation. Catalyzes the phosphorolysis of single-stranded polyribonucleotides processively in the 3'- to 5'-direction. The chain is Polyribonucleotide nucleotidyltransferase from Streptococcus pyogenes serotype M49 (strain NZ131).